The chain runs to 1522 residues: Dicer-like protein 1 (1522 aa).

The span at 1–12 (MTWAGDVEEQDD) shows a compositional bias: acidic residues. Residues 1–37 (MTWAGDVEEQDDYFSCSDVSTSGDRRKRAPQTVTQEE) form a disordered region. Residues 76 to 258 (LFLRAKMQNT…EHVREAAREL (183 aa)) enclose the Helicase ATP-binding domain. 89–96 (LDTGTGKT) is a binding site for ATP. Positions 202-205 (DEAH) match the DEAH box motif. The 169-residue stretch at 408–576 (WLNLYYERTT…DVEQEKAELI (169 aa)) folds into the Helicase C-terminal domain. A Dicer dsRNA-binding fold domain is found at 600-700 (SLSILSHFVA…LPTISKYLPA (101 aa)). Residues 859 to 980 (PFWKWSPQSR…ICPEPLHISN (122 aa)) form the PAZ domain. RNase III domains lie at 995–1166 (IIHR…MQHH) and 1222–1373 (AHKI…VDSE). Mg(2+)-binding residues include glutamate 1262, aspartate 1359, and glutamate 1362. One can recognise a DRBM domain in the interval 1409–1478 (TRLSRLLSIN…SHAALEKLEG (70 aa)). Residues cysteine 1421, histidine 1449, cysteine 1490, and cysteine 1492 each coordinate Zn(2+).

Belongs to the helicase family. Dicer subfamily. Mg(2+) is required as a cofactor. Requires Mn(2+) as cofactor.

Functionally, dicer-like endonuclease involved in cleaving double-stranded RNA in the RNA interference (RNAi) pathway. Produces 21 to 25 bp dsRNAs (siRNAs) which target the selective destruction of homologous RNAs leading to sequence-specific suppression of gene expression, called post-transcriptional gene silencing (PTGS). Part of a broad host defense response against viral infection and transposons. The polypeptide is Dicer-like protein 1 (DCL1) (Phaeosphaeria nodorum (strain SN15 / ATCC MYA-4574 / FGSC 10173) (Glume blotch fungus)).